Consider the following 522-residue polypeptide: Light-independent protochlorophyllide reductase subunit B (522 aa).

D36 provides a ligand contact to [4Fe-4S] cluster. D274 serves as the catalytic Proton donor. Position 409-410 (409-410 (GL)) interacts with substrate. The tract at residues 426-464 (DEAGPSHHGGKAVPASAPRAEATADEGSTPEEAVPPVAA) is disordered. Over residues 455-464 (PEEAVPPVAA) the composition is skewed to low complexity.

Belongs to the ChlB/BchB/BchZ family. As to quaternary structure, protochlorophyllide reductase is composed of three subunits; BchL, BchN and BchB. Forms a heterotetramer of two BchB and two BchN subunits. Requires [4Fe-4S] cluster as cofactor.

It carries out the reaction chlorophyllide a + oxidized 2[4Fe-4S]-[ferredoxin] + 2 ADP + 2 phosphate = protochlorophyllide a + reduced 2[4Fe-4S]-[ferredoxin] + 2 ATP + 2 H2O. It participates in porphyrin-containing compound metabolism; bacteriochlorophyll biosynthesis (light-independent). In terms of biological role, component of the dark-operative protochlorophyllide reductase (DPOR) that uses Mg-ATP and reduced ferredoxin to reduce ring D of protochlorophyllide (Pchlide) to form chlorophyllide a (Chlide). This reaction is light-independent. The NB-protein (BchN-BchB) is the catalytic component of the complex. The chain is Light-independent protochlorophyllide reductase subunit B from Cereibacter sphaeroides (strain ATCC 17025 / ATH 2.4.3) (Rhodobacter sphaeroides).